A 518-amino-acid chain; its full sequence is Chromosomal replication initiator protein DnaA (518 aa).

Residues 1–73 are domain I, interacts with DnaA modulators; sequence MTLAEFWPLC…REELAAGRPA (73 aa). Residues 73 to 180 form a domain II region; it reads AFVFKPGEGV…DAEEARYEQT (108 aa). The disordered stretch occupies residues 144-180; the sequence is HEPRQAAGPASRPESAAVAKARTDAQRDAEEARYEQT. Positions 164–177 are enriched in basic and acidic residues; sequence ARTDAQRDAEEARY. The tract at residues 181–397 is domain III, AAA+ region; it reads NLSPDYTFDT…GAFNRVGASS (217 aa). 4 residues coordinate ATP: G225, G227, K228, and T229. Residues 398–518 form a domain IV, binds dsDNA region; the sequence is RFMNRPVIDI…YEKLLILIQN (121 aa).

The protein belongs to the DnaA family. In terms of assembly, oligomerizes as a right-handed, spiral filament on DNA at oriC.

The protein resides in the cytoplasm. Functionally, plays an essential role in the initiation and regulation of chromosomal replication. ATP-DnaA binds to the origin of replication (oriC) to initiate formation of the DNA replication initiation complex once per cell cycle. Binds the DnaA box (a 9 base pair repeat at the origin) and separates the double-stranded (ds)DNA. Forms a right-handed helical filament on oriC DNA; dsDNA binds to the exterior of the filament while single-stranded (ss)DNA is stabiized in the filament's interior. The ATP-DnaA-oriC complex binds and stabilizes one strand of the AT-rich DNA unwinding element (DUE), permitting loading of DNA polymerase. After initiation quickly degrades to an ADP-DnaA complex that is not apt for DNA replication. Binds acidic phospholipids. This is Chromosomal replication initiator protein DnaA from Neisseria gonorrhoeae (strain ATCC 700825 / FA 1090).